The following is a 259-amino-acid chain: Flagellar L-ring protein (259 aa).

Residues 1–15 form the signal peptide; the sequence is MKRISLIALVTIMSG. The N-palmitoyl cysteine moiety is linked to residue C16. C16 carries the S-diacylglycerol cysteine lipid modification.

It belongs to the FlgH family. As to quaternary structure, the basal body constitutes a major portion of the flagellar organelle and consists of four rings (L,P,S, and M) mounted on a central rod.

Its subcellular location is the cell outer membrane. The protein localises to the bacterial flagellum basal body. Functionally, assembles around the rod to form the L-ring and probably protects the motor/basal body from shearing forces during rotation. The sequence is that of Flagellar L-ring protein from Vibrio vulnificus (strain CMCP6).